Consider the following 346-residue polypeptide: Putative toluene-4-sulfonate monooxygenase system iron-sulfur subunit TsaM2 (346 aa).

Residues 7–108 enclose the Rieske domain; the sequence is WYVAGMATDC…LVERHGLLWI (102 aa). Residues Cys-47, His-49, Cys-66, and His-69 each contribute to the [2Fe-2S] cluster site.

As to quaternary structure, homotetramer. Part of the p-toluenesulfonate methyl-monooxygenase complex TsaBM, comprising the reductase TsaB and the oxygenase TsaM. [2Fe-2S] cluster serves as cofactor.

It catalyses the reaction toluene-4-sulfonate + NADH + O2 + H(+) = 4-(hydroxymethyl)benzenesulfonate + NAD(+) + H2O. Functionally, involved in the toluene-4-sulfonate degradation pathway. Does not discriminate between the sulfonate and the carboxyl substituents and can also be involved in the p-toluenecarboxylate degradation pathway. In Comamonas testosteroni (Pseudomonas testosteroni), this protein is Putative toluene-4-sulfonate monooxygenase system iron-sulfur subunit TsaM2 (tsaM2).